Reading from the N-terminus, the 62-residue chain is MDQRMNGVDPKMLELLVCPLTNGRLTLNRENNELVSEKARLAYPIRDGIPIMLVSEARKIED.

It belongs to the UPF0434 family.

The sequence is that of UPF0434 protein Avi_4243 from Allorhizobium ampelinum (strain ATCC BAA-846 / DSM 112012 / S4) (Agrobacterium vitis (strain S4)).